A 361-amino-acid polypeptide reads, in one-letter code: Alanine racemase (361 aa).

The active-site Proton acceptor; specific for D-alanine is K35. An N6-(pyridoxal phosphate)lysine modification is found at K35. R132 provides a ligand contact to substrate. Y257 serves as the catalytic Proton acceptor; specific for L-alanine. M305 serves as a coordination point for substrate.

This sequence belongs to the alanine racemase family. Pyridoxal 5'-phosphate is required as a cofactor.

The catalysed reaction is L-alanine = D-alanine. The protein operates within amino-acid biosynthesis; D-alanine biosynthesis; D-alanine from L-alanine: step 1/1. Its function is as follows. Catalyzes the interconversion of L-alanine and D-alanine. May also act on other amino acids. The protein is Alanine racemase (alr) of Thioalkalivibrio sulfidiphilus (strain HL-EbGR7).